Consider the following 247-residue polypeptide: Large ribosomal subunit protein uL30 (247 aa).

Met1 bears the N-acetylmethionine mark. 4 repeat units span residues 7–17 (KKKVPAVPETL), 18–29 (KKKRRNFAELKI), 30–41 (KRLRKKFAQKML), and 42–53 (RKARRKLIYEKA). The 4 X 12 AA tandem repeats stretch occupies residues 7–53 (KKKVPAVPETLKKKRRNFAELKIKRLRKKFAQKMLRKARRKLIYEKA). At Thr16 the chain carries Phosphothreonine. Lys123 carries the post-translational modification N6-acetyllysine. Lys126 is subject to N6-succinyllysine. Tyr138 carries the phosphotyrosine modification.

Belongs to the universal ribosomal protein uL30 family. Component of the large ribosomal subunit. Homodimer. Interacts with DHX33.

The protein localises to the cytoplasm. Functionally, component of the large ribosomal subunit. The ribosome is a large ribonucleoprotein complex responsible for the synthesis of proteins in the cell. Binds to G-rich structures in 28S rRNA and in mRNAs. Plays a regulatory role in the translation apparatus; inhibits cell-free translation of mRNAs. The protein is Large ribosomal subunit protein uL30 (RPL7) of Pongo abelii (Sumatran orangutan).